The primary structure comprises 412 residues: Tryptophan 2,3-dioxygenase (412 aa).

Substrate contacts are provided by residues 79–83 (FIVVH), Tyr-146, and Arg-150. Residue His-346 coordinates heme. Substrate is bound at residue Thr-360.

The protein belongs to the tryptophan 2,3-dioxygenase family. In terms of assembly, homotetramer. Requires heme as cofactor.

The catalysed reaction is L-tryptophan + O2 = N-formyl-L-kynurenine. It participates in amino-acid degradation; L-tryptophan degradation via kynurenine pathway; L-kynurenine from L-tryptophan: step 1/2. Functionally, heme-dependent dioxygenase that catalyzes the oxidative cleavage of the L-tryptophan (L-Trp) pyrrole ring and converts L-tryptophan to N-formyl-L-kynurenine. Catalyzes the oxidative cleavage of the indole moiety. In Sorangium cellulosum (strain So ce56) (Polyangium cellulosum (strain So ce56)), this protein is Tryptophan 2,3-dioxygenase.